Consider the following 465-residue polypeptide: Putative subtilisin-like proteinase 1 (465 aa).

An N-terminal signal peptide occupies residues 1–17 (MILAIISLSVVICREVS). The Inhibitor I9 domain occupies 19-90 (YIVMFDQDPS…VKMVVKDSPV (72 aa)). The 333-residue stretch at 115–447 (PWGLARVGGS…PSLFNANKKK (333 aa)) folds into the Peptidase S8 domain. Residues Asp-148 and His-180 each act as charge relay system in the active site. Cys-329 and Cys-360 are joined by a disulfide. The active-site Charge relay system is Ser-386.

It belongs to the peptidase S8 family.

The protein resides in the secreted. Its subcellular location is the extracellular space. Functionally, may be involved in the degradation of proteins for nutrient acquisition or possess a regulatory function by proteolytic activation of proproteins. The sequence is that of Putative subtilisin-like proteinase 1 (SPL1) from Encephalitozoon cuniculi (strain GB-M1) (Microsporidian parasite).